Reading from the N-terminus, the 142-residue chain is Hemoglobin cathodic subunit alpha (142 aa).

Residue Ser-1 is modified to N-acetylserine. The Globin domain maps to 1 to 142 (SLTAKDKALV…LSSTAADKYR (142 aa)). His-59 is a binding site for O2. His-88 contributes to the heme b binding site.

This sequence belongs to the globin family. As to quaternary structure, heterotetramer of two alpha chains and two beta chains.

Involved in oxygen transport from gills to the various peripheral tissues. This is Hemoglobin cathodic subunit alpha from Hoplosternum littorale (Hassar).